Consider the following 464-residue polypeptide: MNTLLVGINVAVMLILVGVLYYMQRKHVSFNKRVFTALGVGIIFGLILQFIYEPTSKVIIESNTWFGLIGNGYVKLLQMIVMPLILVSIISAFTKLQLTKNLGKISGLIIGILILTTGIAAAVGIAASAGFDVSATGLQQGDAESARLKLVEERFTSIEKTTIPDKLLELLPTNPFLDLTGARPTSTISVVIFAAFIGIAFIGVKRKYPEQAELFKKMLDAVYAIVMRMVTLILRLTPYGVLALMAKTVAGSDINAILKLGNFVLASYVALIVMFVIHLLLIALSGLNPIQYLKKVFPVLTFAFTSRSSAGAMPLNIEAQKEKLGISEGIANFAASFGVSIGQNGCAGIYPAMLAMMVAPTVGIDPLQPQFILTLIAVVAISSFGVAGVGGGATFAALIVLSTMNLPIGIVALVISVEPLIDMGRTALNVSGSMTAGLISSKWLGELDQDTYNQDDTKTGEIAS.

10 helical membrane passes run 3-23 (TLLV…LYYM), 34-54 (VFTA…IYEP), 73-93 (YVKL…ISAF), 107-127 (GLII…GIAA), 184-204 (PTST…FIGV), 225-245 (IVMR…LALM), 263-283 (FVLA…LLIA), 347-367 (AGIY…IDPL), 371-391 (FILT…GVGG), and 395-415 (FAAL…ALVI).

Belongs to the dicarboxylate/amino acid:cation symporter (DAACS) (TC 2.A.23) family.

It is found in the membrane. Its function is as follows. Mediates uptake of L-cystine, the oxidized form of L-cysteine. This Bacillus cereus (strain ATCC 10987 / NRS 248) protein is L-cystine uptake protein TcyP.